The following is a 97-amino-acid chain: Small ribosomal subunit protein eS25 (97 aa).

The disordered stretch occupies residues 1–24; it reads MAPAASGAKKQKKKWSKGKVKDKA. Over residues 9 to 18 the composition is skewed to basic residues; it reads KKQKKKWSKG.

Belongs to the eukaryotic ribosomal protein eS25 family. Component of the small ribosomal subunit (SSU). Mature N.crassa ribosomes consist of a small (40S) and a large (60S) subunit. The 40S small subunit contains 1 molecule of ribosomal RNA (18S rRNA) and at least 32 different proteins. The large 60S subunit contains 3 rRNA molecules (26S, 5.8S and 5S rRNA) and at least 42 different proteins.

The protein localises to the cytoplasm. Functionally, component of the ribosome, a large ribonucleoprotein complex responsible for the synthesis of proteins in the cell. The small ribosomal subunit (SSU) binds messenger RNAs (mRNAs) and translates the encoded message by selecting cognate aminoacyl-transfer RNA (tRNA) molecules. The large subunit (LSU) contains the ribosomal catalytic site termed the peptidyl transferase center (PTC), which catalyzes the formation of peptide bonds, thereby polymerizing the amino acids delivered by tRNAs into a polypeptide chain. The nascent polypeptides leave the ribosome through a tunnel in the LSU and interact with protein factors that function in enzymatic processing, targeting, and the membrane insertion of nascent chains at the exit of the ribosomal tunnel. This chain is Small ribosomal subunit protein eS25 (rps-25), found in Neurospora crassa (strain ATCC 24698 / 74-OR23-1A / CBS 708.71 / DSM 1257 / FGSC 987).